Reading from the N-terminus, the 95-residue chain is Opiscorpine-4 (95 aa).

A signal peptide spans 1–19 (MNNKLTALIFLGLLAIASC). The BetaSPN-type CS-alpha/beta domain occupies 55-95 (EFMCVANIDMTKSCDTHCQKASGEKGYCHGTKCKCGVPLSY). 3 disulfide bridges follow: Cys58-Cys82, Cys68-Cys87, and Cys72-Cys89.

The protein belongs to the long chain scorpion toxin family. Class 3 subfamily. Expressed by the venom gland.

The protein localises to the secreted. In terms of biological role, has antimicrobial activity against yeasts and bacteria. This Opistophthalmus carinatus (African yellow leg scorpion) protein is Opiscorpine-4.